The primary structure comprises 262 residues: Thiamine thiazole synthase (262 aa).

Residues Ser40, 59–60 (ER), Gly67, Val133, and 159–161 (HID) each bind NAD(+). Residues Asp161 and His176 each coordinate Fe cation. NAD(+) is bound by residues Ser179 and Met226. Glycine is bound at residue Arg236.

It belongs to the THI4 family. As to quaternary structure, homooctamer; tetramer of dimers. It depends on Fe(2+) as a cofactor.

The catalysed reaction is hydrogen sulfide + glycine + NAD(+) = ADP-5-ethyl-4-methylthiazole-2-carboxylate + nicotinamide + 3 H2O + H(+). It functions in the pathway cofactor biosynthesis; thiamine diphosphate biosynthesis. Its function is as follows. Involved in the biosynthesis of the thiazole moiety of thiamine. Catalyzes the conversion of NAD and glycine to adenosine diphosphate 5-(2-hydroxyethyl)-4-methylthiazole-2-carboxylate (ADT), an adenylated thiazole intermediate, using free sulfide as a source of sulfur. This is Thiamine thiazole synthase from Methanococcus maripaludis (strain C7 / ATCC BAA-1331).